Reading from the N-terminus, the 122-residue chain is Large ribosomal subunit protein bL12 (122 aa).

It belongs to the bacterial ribosomal protein bL12 family. As to quaternary structure, homodimer. Part of the ribosomal stalk of the 50S ribosomal subunit. Forms a multimeric L10(L12)X complex, where L10 forms an elongated spine to which 2 to 4 L12 dimers bind in a sequential fashion. Binds GTP-bound translation factors.

In terms of biological role, forms part of the ribosomal stalk which helps the ribosome interact with GTP-bound translation factors. Is thus essential for accurate translation. In Neisseria lactamica, this protein is Large ribosomal subunit protein bL12.